We begin with the raw amino-acid sequence, 481 residues long: MKKVELVFIPSPGAGHLVPTLQFAKRLIDRNDRISITILAIQSYFPTTLSSYTKSIAASEPRIRFIDVPQPQDRPPQEMYKSPAKFFSLYIESQVPSVKKIITNLVSSSANSSDSIRVAALVVDLFCVSMIDVAKELNIPSYLFLTSNAGYLAFMLHLPIVNEKNQIAVEESDPEWSIPGIVHPVPPRVFPVALTDGRCSAYIKLASRFRETRGIIVNTFVELETHAITLFSTDDGIPPVYPVGPVIDMDDGQAHSNLDQAQRDRIIKWLDDQPQKSVVFLCFGSMGSFRAEQVKEIALGLEQSGQRFLWSLRMPSPIGTVPCDCSNLEEVLPDGFLERTNGKKGLICGWAPQVEILAHSATGGFLSHCGWNSILESLWHGVPITTWPMYAEQQLNAFRMARELGMALEMRLDYKRGSADVVGADEIERAVVGVMEKDSEVRKKVEEMGKMARKAVKDGGSSFASVGRFIEDVIGENSGFK.

Residues serine 285, 350-351, 368-376, and 390-393 each bind UDP-alpha-D-glucose; these read WA, HCGWNSILE, and YAEQ.

The protein belongs to the UDP-glycosyltransferase family.

Functionally, glycosyltransferase that possesses chalcone and flavonol 2'-O-glycosyltransferase activity. Converts phloretin to phlorizin (phloretin 2'-O-glucoside), a potent antioxidant. Possesses glycosyltransferase activity toward quercetin, isoliquiritigenin, butein and caffeic acid. The polypeptide is UDP-glycosyltransferase 71K2 (Pyrus communis (Pear)).